The primary structure comprises 443 residues: MSKLNMTPREIVAYLDEYIIGQKEAKKSIAIAFRNRYRRLQLEKSLQEEITPKNILMIGSTGVGKTEIARRIAKIMELPFVKVEASKYTEVGFVGRDVESMVRDLVNNSVLLVENEHKEKLKDKIEEAVVEKIAKKLLPPLPNGVSEEKKQEYANSLLKMQQRIVQGELDSREIEIEVRKKSIEIDSNVPPEILRVQENLIKVFHKEQDKVKKTLSVKEAKEALKAEISDTLLDSEAIKMEGLKRAESSGVIFIDEIDKIAVSSKEGSRQDPSKEGVQRDLLPIVEGSVVNTKYGSIKTEHILFIAAGAFHLSKPSDLIPELQGRFPLRVELENLTEEIMYMILTQTKTSIIKQYQALLQVEGVGIAFEDDAIKELAKLSYNANQKSEDIGARRLHTTIEKVLEDISFEAEDYLGQKVTITKELVQSKLEDLVADENLVKYIL.

Residues Ile-20, 62–67 (GVGKTE), Asp-255, Glu-321, and Arg-393 each bind ATP.

Belongs to the ClpX chaperone family. HslU subfamily. A double ring-shaped homohexamer of HslV is capped on each side by a ring-shaped HslU homohexamer. The assembly of the HslU/HslV complex is dependent on binding of ATP.

Its subcellular location is the cytoplasm. In terms of biological role, ATPase subunit of a proteasome-like degradation complex; this subunit has chaperone activity. The binding of ATP and its subsequent hydrolysis by HslU are essential for unfolding of protein substrates subsequently hydrolyzed by HslV. HslU recognizes the N-terminal part of its protein substrates and unfolds these before they are guided to HslV for hydrolysis. In Helicobacter pylori (strain HPAG1), this protein is ATP-dependent protease ATPase subunit HslU.